The following is a 40-amino-acid chain: Amyloid-beta precursor protein (40 aa).

Belongs to the APP family. As to quaternary structure, binds, via its C-terminus, to the PID domain of several cytoplasmic proteins, including APBB family members, the APBA family, MAPK8IP1, SHC1 and NUMB and DAB1. Binding to DAB1 inhibits its serine phosphorylation. Interacts (via NPXY motif) with DAB2 (via PID domain); the interaction is impaired by tyrosine phosphorylation of the NPXY motif. Also interacts with GPCR-like protein BPP, APPBP1, IB1, KNS2 (via its TPR domains), APPBP2 (via BaSS) and DDB1. In vitro, it binds MAPT via the MT-binding domains. Associates with microtubules in the presence of ATP and in a kinesin-dependent manner. Interacts, through a C-terminal domain, with GNAO1. Interacts with CPEB1, ANKS1B and AGER. Interacts with ITM2B. Interacts with ITM2C. Interacts with IDE. Can form homodimers; dimerization is enhanced in the presence of Cu(2+) ions. Can form homodimers; this is promoted by heparin binding. Interacts with SORL1 (via N-terminal ectodomain); this interaction retains APP in the trans-Golgi network and reduces processing into soluble APP-alpha and amyloid-beta peptides. Interacts with PLD3. Interacts with VDAC1. Interacts with NSG1; could regulate APP processing. Interacts with LRRK2. Interacts (via cytoplasmic domain) with KIF5B. Interacts (via C-terminus) with APBB2/FE65L1 (via C-terminus). Interacts (via intracellular domain) with APBB3. In terms of processing, proteolytically processed under normal cellular conditions. Cleavage either by alpha-secretase, beta-secretase or theta-secretase leads to generation and extracellular release of soluble APP peptides, S-APP-alpha and S-APP-beta, and the retention of corresponding membrane-anchored C-terminal fragments, C80, C83 and C99. Subsequent processing of C80 and C83 by gamma-secretase yields P3 peptides. This is the major secretory pathway and is non-amyloidogenic. Alternatively, presenilin/nicastrin-mediated gamma-secretase processing of C99 releases the amyloid-beta proteins, amyloid-beta protein 40 and amyloid-beta protein 42, major components of amyloid plaques, and the cytotoxic C-terminal fragments, gamma-CTF(50), gamma-CTF(57) and gamma-CTF(59). PSEN1 cleavage is more efficient with C83 than with C99 as substrate (in vitro). Amyloid-beta protein 40 and Amyloid-beta protein 42 are cleaved by ACE. Many other minor amyloid-beta peptides, amyloid-beta 1-X peptides, are found in cerebral spinal fluid (CSF) including the amyloid-beta X-15 peptides, produced from the cleavage by alpha-secretase.

It is found in the cell membrane. It localises to the membrane. The protein localises to the perikaryon. The protein resides in the cell projection. Its subcellular location is the growth cone. It is found in the clathrin-coated pit. It localises to the early endosome. The protein localises to the cytoplasmic vesicle. Functionally, functions as a cell surface receptor and performs physiological functions on the surface of neurons relevant to neurite growth, neuronal adhesion and axonogenesis. Interaction between APP molecules on neighboring cells promotes synaptogenesis. Involved in cell mobility and transcription regulation through protein-protein interactions. Can promote transcription activation through binding to APBB1-KAT5 and inhibit Notch signaling through interaction with Numb. Couples to apoptosis-inducing pathways such as those mediated by G(o) and JIP. Inhibits G(o)-alpha ATPase activity. Acts as a kinesin I membrane receptor, mediating the axonal transport of beta-secretase and presenilin 1. May be involved in copper homeostasis/oxidative stress through copper ion reduction. In vitro, copper-metallated APP induces neuronal death directly or is potentiated through Cu(2+)-mediated low-density lipoprotein oxidation. Can regulate neurite outgrowth through binding to components of the extracellular matrix such as heparin and collagen I and IV. Induces a AGER-dependent pathway that involves activation of p38 MAPK, resulting in internalization of amyloid-beta peptide and mitochondrial dysfunction in cultured cortical neurons. Provides Cu(2+) ions for GPC1 which are required for release of nitric oxide (NO) and subsequent degradation of the heparan sulfate chains on GPC1. The chain is Amyloid-beta precursor protein from Felis catus (Cat).